The chain runs to 482 residues: 2-succinylbenzoate--CoA ligase (482 aa).

This sequence belongs to the ATP-dependent AMP-binding enzyme family. MenE subfamily.

The enzyme catalyses 2-succinylbenzoate + ATP + CoA = 2-succinylbenzoyl-CoA + AMP + diphosphate. The protein operates within quinol/quinone metabolism; 1,4-dihydroxy-2-naphthoate biosynthesis; 1,4-dihydroxy-2-naphthoate from chorismate: step 5/7. It participates in quinol/quinone metabolism; menaquinone biosynthesis. In terms of biological role, converts 2-succinylbenzoate (OSB) to 2-succinylbenzoyl-CoA (OSB-CoA). In Bacillus cereus (strain ATCC 14579 / DSM 31 / CCUG 7414 / JCM 2152 / NBRC 15305 / NCIMB 9373 / NCTC 2599 / NRRL B-3711), this protein is 2-succinylbenzoate--CoA ligase.